The primary structure comprises 500 residues: Sulfate adenylyltransferase (500 aa).

The interval 1–165 (MLSPHGGILQ…LEAIQLPAHY (165 aa)) is N-terminal. The segment at 166 to 390 (DYLNLRKSPA…LRQYNPPRYR (225 aa)) is catalytic. Glutamine 193 serves as a coordination point for sulfate. ATP-binding positions include 193 to 196 (QTRN) and 287 to 290 (GRDH). Residues threonine 194, arginine 195, and asparagine 196 contribute to the active site. Arginine 195 contributes to the sulfate binding site. A sulfate-binding site is contributed by alanine 291. Isoleucine 329 is a binding site for ATP. The segment at 391-500 (QGFVIVVNHE…FLEDNKFFQF (110 aa)) is required for oligomerization; adenylyl-sulfate kinase-like.

Belongs to the sulfate adenylyltransferase family. As to quaternary structure, homohexamer. Dimer of trimers.

The protein resides in the cytoplasm. It carries out the reaction sulfate + ATP + H(+) = adenosine 5'-phosphosulfate + diphosphate. It functions in the pathway sulfur metabolism; hydrogen sulfide biosynthesis; sulfite from sulfate: step 1/3. Catalyzes the first intracellular reaction of sulfate assimilation, forming adenosine-5'-phosphosulfate (APS) from inorganic sulfate and ATP. Plays an important role in sulfate activation as a component of the biosynthesis pathway of sulfur-containing amino acids. This is Sulfate adenylyltransferase from Eremothecium gossypii (strain ATCC 10895 / CBS 109.51 / FGSC 9923 / NRRL Y-1056) (Yeast).